A 210-amino-acid polypeptide reads, in one-letter code: Imidazole glycerol phosphate synthase subunit HisH (210 aa).

The region spanning 7–210 is the Glutamine amidotransferase type-1 domain; that stretch reads KVVIIDTGCA…SQLIKNFLEM (204 aa). The active-site Nucleophile is cysteine 82. Catalysis depends on residues histidine 192 and glutamate 194.

Heterodimer of HisH and HisF.

Its subcellular location is the cytoplasm. It catalyses the reaction 5-[(5-phospho-1-deoxy-D-ribulos-1-ylimino)methylamino]-1-(5-phospho-beta-D-ribosyl)imidazole-4-carboxamide + L-glutamine = D-erythro-1-(imidazol-4-yl)glycerol 3-phosphate + 5-amino-1-(5-phospho-beta-D-ribosyl)imidazole-4-carboxamide + L-glutamate + H(+). The enzyme catalyses L-glutamine + H2O = L-glutamate + NH4(+). The protein operates within amino-acid biosynthesis; L-histidine biosynthesis; L-histidine from 5-phospho-alpha-D-ribose 1-diphosphate: step 5/9. IGPS catalyzes the conversion of PRFAR and glutamine to IGP, AICAR and glutamate. The HisH subunit catalyzes the hydrolysis of glutamine to glutamate and ammonia as part of the synthesis of IGP and AICAR. The resulting ammonia molecule is channeled to the active site of HisF. The sequence is that of Imidazole glycerol phosphate synthase subunit HisH from Photobacterium profundum (strain SS9).